The following is an 862-amino-acid chain: DNA mismatch repair protein MutS (862 aa).

618–625 (GPNMGGKS) contacts ATP. A disordered region spans residues 799–824 (QLESRDNQASPAVASAPQQQSLSLSP). A compositionally biased stretch (low complexity) spans 806 to 824 (QASPAVASAPQQQSLSLSP).

The protein belongs to the DNA mismatch repair MutS family.

Functionally, this protein is involved in the repair of mismatches in DNA. It is possible that it carries out the mismatch recognition step. This protein has a weak ATPase activity. In Shewanella denitrificans (strain OS217 / ATCC BAA-1090 / DSM 15013), this protein is DNA mismatch repair protein MutS.